Here is a 311-residue protein sequence, read N- to C-terminus: MGGGGEDEYESLPTHSIPVHLAAGALAGAVEHCVMFPFDSVKTRMQSLCPCETKCPTPVHSLMSIVKREGWLRPLRGVNAVAAGSMPAHALYFTVYEKMKSFLTGNTAGHEHTLAYGASGVVATLIHDAVMNPAEVVKQRMQMAYSPYGSSLECARCVYNREGFAAFYRSYTTQLAMNVPFQAIHFMGYEFWQQVLNPEHKYDPKSHLIAGGLAGGLAAAVTTPMDCVKTVLNTQQAAEADPSNRRIFLKARYRYRGISDAVRTIYSQRGMAGFSCGLQARVIFQVPATALSWSVYELFKFMLSFEGGHSS.

Solcar repeat units lie at residues His15–Phe102, Glu111–Val195, and Tyr202–Met302. The next 6 helical transmembrane spans lie at Ile17–Phe36, Gly77–Tyr96, His112–Asn132, Ser170–Tyr189, Pro204–Thr223, and Gly277–Tyr296.

It belongs to the mitochondrial carrier (TC 2.A.29) family.

Its subcellular location is the mitochondrion inner membrane. Mitochondrial iron transporter that mediates iron uptake. Probably required for heme synthesis of hemoproteins and Fe-S cluster assembly. This chain is Mitoferrin, found in Caenorhabditis briggsae.